The primary structure comprises 85 residues: U4-theraphotoxin-Hhn1c (85 aa).

The signal sequence occupies residues 1 to 22; the sequence is MKVTLIAIVTCAAVLVLHTTAA. Positions 23–48 are excised as a propeptide; that stretch reads EELEAESQLMEVGMPDTELAAVDEER. Cystine bridges form between C52–C66, C56–C77, and C71–C82.

This sequence belongs to the neurotoxin 12 (Hwtx-2) family. 02 (Hwtx-2) subfamily. Expressed by the venom gland.

The protein localises to the secreted. In terms of biological role, postsynaptic neurotoxin. This chain is U4-theraphotoxin-Hhn1c, found in Cyriopagopus hainanus (Chinese bird spider).